Consider the following 134-residue polypeptide: Replication enhancer protein (134 aa).

It belongs to the geminiviridae replication enhancer protein family. In terms of assembly, homooligomer. Interacts with the replication-associated protein (REP). Interacts with host proliferating cell nuclear antigen (PCNA). Interacts with host retinoblastoma-related protein 1 (RBR1), and may thereby deregulate the host cell cycle. Oligomerization and interaction with PCNA are necessary for optimal replication enhancement.

In terms of biological role, increases viral DNA accumulation. Enhances infectivity and symptom expression. This chain is Replication enhancer protein, found in Squash leaf curl virus (SLCV).